Here is a 24-residue protein sequence, read N- to C-terminus: Grammistin Gs G (24 aa).

This sequence belongs to the grammistin family. Group 1 subfamily. In terms of assembly, exists as aggregates of 3-4 molecules. In terms of tissue distribution, expressed by the skin glands.

Its subcellular location is the secreted. In terms of biological role, thanks to its abundant amphiphilic alpha-helices, it may integrate into membrane phospholipids, leading to lysis of the membrane. Its high hemolytic activity is inhibited by phospholipids, but not by cholesterol. Has antibacterial activity with a broad spectrum against various species of bacteria including both Gram-positive and Gram-negative groups. Also has high ichthyotoxic activity. This is Grammistin Gs G from Grammistes sexlineatus (Goldenstriped soapfish).